Reading from the N-terminus, the 190-residue chain is Elongation factor P (190 aa).

The protein belongs to the elongation factor P family.

The protein localises to the cytoplasm. It functions in the pathway protein biosynthesis; polypeptide chain elongation. Its function is as follows. Involved in peptide bond synthesis. Stimulates efficient translation and peptide-bond synthesis on native or reconstituted 70S ribosomes in vitro. Probably functions indirectly by altering the affinity of the ribosome for aminoacyl-tRNA, thus increasing their reactivity as acceptors for peptidyl transferase. The chain is Elongation factor P (efp) from Mycoplasma pneumoniae (strain ATCC 29342 / M129 / Subtype 1) (Mycoplasmoides pneumoniae).